Reading from the N-terminus, the 1423-residue chain is Interphotoreceptor matrix proteoglycan 2 (1423 aa).

The N-terminal stretch at 1 to 27 is a signal peptide; sequence MFAFLWKISLCLLVLGVITGDPQAVAA. The Extracellular portion of the chain corresponds to 28–1289; it reads EEKQAKDASP…EYVSEPLVVG (1262 aa). An N-linked (GlcNAc...) asparagine glycan is attached at Asn150. Residues 245-358 enclose the SEA 1 domain; that stretch reads TEQMIEFSIV…NPTVVYTISD (114 aa). Residues 265-273 are hyaluronan-binding motif involved in chondroitin sulfate A-binding; that stretch reads SDPDTAKYQ. N-linked (GlcNAc...) asparagine glycosylation is found at Asn325 and Asn375. Disordered regions lie at residues 423 to 469, 522 to 559, and 577 to 602; these read AERP…DSEV, DSSDEFEDTGLSDDFLLPSSPSSHLVPEEPPSTDDYTA, and TKRTVTAEKEVVTQGSPADSSSADSL. A compositionally biased stretch (acidic residues) spans 523–532; the sequence is SSDEFEDTGL. Residues 537 to 546 are compositionally biased toward low complexity; that stretch reads LLPSSPSSHL. A compositionally biased stretch (basic and acidic residues) spans 577–587; the sequence is TKRTVTAEKEV. N-linked (GlcNAc...) asparagine glycosylation occurs at Asn676. A disordered region spans residues 886-907; the sequence is FEVSTDTSTEEQQSLDSSLADR. The span at 889 to 902 shows a compositional bias: polar residues; that stretch reads STDTSTEEQQSLDS. The 114-residue stretch at 1083 to 1196 folds into the SEA 2 domain; that stretch reads RALVVFFSLR…YSLDVESGEQ (114 aa). 3 N-linked (GlcNAc...) asparagine glycosylation sites follow: Asn1128, Asn1142, and Asn1160. 2 EGF-like domains span residues 1196-1234 and 1237-1279; these read QADPCKFQACNEFSECLVNRWSGEAECVCNPGYLSIDGL and NSIC…EHCE. 5 disulfides stabilise this stretch: Cys1200–Cys1211, Cys1205–Cys1222, Cys1240–Cys1253, Cys1247–Cys1263, and Cys1265–Cys1278. The interval 1266–1274 is hyaluronan-binding motif involved in chondroitin sulfate C-binding; sequence RVGENWWYR. Residues 1290–1310 traverse the membrane as a helical segment; that stretch reads IAIASVAGFLLVASAVIFFLA. The Cytoplasmic segment spans residues 1311 to 1423; it reads RTLRDQYTKS…FVRQHQMKLL (113 aa). The hyaluronan-binding motif involved in chondroitin sulfate C-binding stretch occupies residues 1322 to 1327; that stretch reads TEDSQG.

Post-translationally, highly glycosylated (N- and O-linked carbohydrates). As to expression, expressed in retina.

Its subcellular location is the photoreceptor outer segment membrane. It localises to the photoreceptor inner segment membrane. The protein resides in the secreted. It is found in the extracellular space. The protein localises to the extracellular matrix. Its subcellular location is the interphotoreceptor matrix. In terms of biological role, chondroitin sulfate- and hyaluronan-binding proteoglycan involved in the organization of interphotoreceptor matrix. This chain is Interphotoreceptor matrix proteoglycan 2 (IMPG2), found in Gallus gallus (Chicken).